We begin with the raw amino-acid sequence, 107 residues long: Thioredoxin (107 aa).

The region spanning 2–107 (SEVLHINDAD…QLANFINQHI (106 aa)) is the Thioredoxin domain. A disulfide bond links Cys-32 and Cys-35.

Belongs to the thioredoxin family.

Its function is as follows. Participates in various redox reactions through the reversible oxidation of its active center dithiol to a disulfide and catalyzes dithiol-disulfide exchange reactions. The sequence is that of Thioredoxin (trxA) from Haemophilus influenzae (strain ATCC 51907 / DSM 11121 / KW20 / Rd).